A 140-amino-acid polypeptide reads, in one-letter code: 5-NmdU N-acetyltransferase (140 aa).

Residues 2–140 enclose the N-acetyltransferase domain; it reads IVVRKALPEE…GEGLALFKEW (139 aa).

This sequence belongs to the acetyltransferase family.

The enzyme catalyses 5-aminomethyl-dUMP in DNA + acetyl-CoA = 5-acetylaminomethyl-dUMP in DNA + CoA + H(+). Acetylates 5-aminomethyl-2'-deoxyuridine (5-NmdU) to produce 5-acetylaminomethyl-2'-deoxyuridine (5-AcNmdU) on DNA as a step in the pathway leading to thymidine hypermodifications in the viral genome. As a final result of the pathway of hypermodification, 5-acetylaminomethyl-2'-deoxyuridine (5-AcNmdU) substitutes for a subset of thymidines in the viral DNA. These modifications probably prevent degradation of viral genome by the host restriction-modification antiviral defense system. The chain is 5-NmdU N-acetyltransferase from Pseudomonas aeruginosa.